Consider the following 113-residue polypeptide: Prefoldin subunit beta (113 aa).

This sequence belongs to the prefoldin subunit beta family. Heterohexamer of two alpha and four beta subunits.

The protein localises to the cytoplasm. Molecular chaperone capable of stabilizing a range of proteins. Seems to fulfill an ATP-independent, HSP70-like function in archaeal de novo protein folding. The polypeptide is Prefoldin subunit beta (Methanococcus maripaludis (strain C7 / ATCC BAA-1331)).